We begin with the raw amino-acid sequence, 131 residues long: Small ribosomal subunit protein uS8 (131 aa).

This sequence belongs to the universal ribosomal protein uS8 family. In terms of assembly, part of the 30S ribosomal subunit. Contacts proteins S5 and S12.

One of the primary rRNA binding proteins, it binds directly to 16S rRNA central domain where it helps coordinate assembly of the platform of the 30S subunit. This chain is Small ribosomal subunit protein uS8, found in Vesicomyosocius okutanii subsp. Calyptogena okutanii (strain HA).